The primary structure comprises 297 residues: MGTTLDIKIKRANKVYHAGEMLSGVVVISSKDSVQHQGVSLTMEGTVNLQLSAKSVGVFEAFYNSVKPIQIINSTIDVLKPGKIPSGKTEVPFEFPLLVKGSKVLYETYHGVFVNIQYTLRCDMRRSLLAKDLTKTCEFIVHSAPQKGKLTPSPVDFTITPETLQNVKERASLPKFFIRGHLNSTNCAITQPLTGELVVEHSDAAIRSIELQLVRVETCGCAEGYARDATEIQNIQIADGDICRNLSVPLYMVFPRLFTCPTLETTNFKVEFEVNVVVLLHADHLITENFPLKLCRT.

The protein belongs to the VPS26 family. As to quaternary structure, component of the commander complex that is essential for endosomal recycling of transmembrane cargos; the commander complex is composed of the CCC subcomplex and the retriever subcomplex. Component of the heterotrimeric retriever complex consisting of VPS26C, VPS29 and VPS35L; within the complex interacts with VPS35L. Interacts with SNX17 (via C-terminus); the interaction is direct and associates SNX17 with the retriever complex. Interacts with SNX31; the interaction is direct.

The protein localises to the endosome. Its function is as follows. Component of the commander complex that is essential for endosomal recycling of transmembrane cargos; the commander complex is composed of the CCC subcomplex and the retriever subcomplex. Component of the retriever complex, which is a heterotrimeric complex related to retromer cargo-selective complex (CSC) and essential for retromer-independent retrieval and recycling of numerous cargos such as integrin alpha-5/beta-1 (ITGA5:ITGB1). The recruitment of the retriever complex to the endosomal membrane involves CCC and WASH complexes. In the endosomes, drives the retriever and recycling of NxxY-motif-containing cargo proteins by coupling to SNX17, a cargo essential for the homeostatic maintenance of numerous cell surface proteins associated with processes that include cell migration, cell adhesion, nutrient supply and cell signaling. The chain is Vacuolar protein sorting-associated protein 26C from Mus musculus (Mouse).